Here is an 845-residue protein sequence, read N- to C-terminus: ATPase morc-1 (845 aa).

Residues N43, S88–K90, and R97–K103 each bind ATP. N43 is a binding site for Mg(2+). The stretch at A284–I311 forms a coiled coil. K422 contributes to the ATP binding site. Disordered stretches follow at residues L566–S590 and K628–V739. Over residues S574–S590 the composition is skewed to low complexity. Positions H637–R646 are enriched in basic and acidic residues.

Predominantly forms monomers and dimers, but multimerizes to form trimers and tetramers upon DNA binding. Expressed in germline and somatic cells.

The protein resides in the nucleus. It localises to the nuclear body. It catalyses the reaction ATP + H2O = ADP + phosphate + H(+). Binds non-specifically to DNA and forms static foci which grow by recruiting other morc-1 molecules, and thereby stimulates conformational changes and compaction of DNA, which appears to be enhanced by ATP-binding, but does not require ATP activity. Preferentially binds to long DNAs. Compacts and entraps segments of DNA by sequentially forming loops along the DNA, beginning at the free ends of single- and double-tethered DNA. Does not extrude the DNA loops on compacted double-tethered DNA. Involved in gene silencing. Plays a role in germline RNA interference (RNAi), and in particular, the silencing of endogenous small interfering RNA (endo-siRNA) target genes. May play a role in heterochromatin localization and condensation, and the siRNAi-directed trimethylation of 'Lys-9' of histone H3 in hermaphrodite X chromosomes. Promotes transgenerational epigenetic inheritance and germline immortality. The sequence is that of ATPase morc-1 from Caenorhabditis elegans.